Reading from the N-terminus, the 226-residue chain is Large ribosomal subunit protein mL67 (226 aa).

The protein belongs to the mitochondrion-specific ribosomal protein mL67 family. Component of the mitochondrial large ribosomal subunit (mt-LSU). Mature yeast 74S mitochondrial ribosomes consist of a small (37S) and a large (54S) subunit. The 37S small subunit contains a 15S ribosomal RNA (15S mt-rRNA) and 34 different proteins. The 54S large subunit contains a 21S rRNA (21S mt-rRNA) and 46 different proteins.

Its subcellular location is the nucleus. The protein localises to the mitochondrion. Functionally, component of the mitochondrial ribosome (mitoribosome), a dedicated translation machinery responsible for the synthesis of mitochondrial genome-encoded proteins, including at least some of the essential transmembrane subunits of the mitochondrial respiratory chain. The mitoribosomes are attached to the mitochondrial inner membrane and translation products are cotranslationally integrated into the membrane. mL67/MHR1 also has extraribosomal functions, being involved in regulation of mitochondrial DNA recombination, maintenance and repair, and generation of homoplasmic cells. mL67/MHR1 also acts as transcription factor involved in regulation of RNA polymerase II-dependent transcription. This Saccharomyces cerevisiae (strain ATCC 204508 / S288c) (Baker's yeast) protein is Large ribosomal subunit protein mL67 (MHR1).